We begin with the raw amino-acid sequence, 369 residues long: Glycerol-3-phosphate dehydrogenase [NAD(P)+] (369 aa).

Residues Ser6, Trp7, Arg27, Arg28, and Lys101 each coordinate NADPH. Positions 101 and 131 each coordinate sn-glycerol 3-phosphate. NADPH is bound at residue Ala135. Sn-glycerol 3-phosphate-binding residues include Lys186, Asp239, Ser249, Arg250, and Asn251. The active-site Proton acceptor is the Lys186. Residue Arg250 participates in NADPH binding. Glu276 is a binding site for NADPH. The interval 312 to 369 (KDIAPHLTTDDEPQGERTRGERTTDDGQGQGRTSVWGSLKRAFDQLRDGGGSSRRDRP) is disordered. Basic and acidic residues-rich tracts occupy residues 325–336 (QGERTRGERTTD) and 352–369 (RAFD…RDRP).

This sequence belongs to the NAD-dependent glycerol-3-phosphate dehydrogenase family.

Its subcellular location is the cytoplasm. The catalysed reaction is sn-glycerol 3-phosphate + NAD(+) = dihydroxyacetone phosphate + NADH + H(+). It catalyses the reaction sn-glycerol 3-phosphate + NADP(+) = dihydroxyacetone phosphate + NADPH + H(+). It participates in membrane lipid metabolism; glycerophospholipid metabolism. Catalyzes the reduction of the glycolytic intermediate dihydroxyacetone phosphate (DHAP) to sn-glycerol 3-phosphate (G3P), the key precursor for phospholipid synthesis. The sequence is that of Glycerol-3-phosphate dehydrogenase [NAD(P)+] from Leifsonia xyli subsp. xyli (strain CTCB07).